Here is a 383-residue protein sequence, read N- to C-terminus: Protein ctg-1 (383 aa).

A CRAL-TRIO domain is found at 73 to 247 (PPECLEKYCG…YWGGNLVENG (175 aa)). The GOLD domain occupies 271–380 (KKAMADYDQL…AKQLRYNIEI (110 aa)).

As to expression, highly expressed in cells of the pi uterine cell lineage.

The protein resides in the cytoplasm. It localises to the cytosol. Functionally, vesicle trafficking protein. Functions in uterine cells to promote basement membrane (BM) mobility and BM gap formation during tissue remodeling. This Caenorhabditis elegans protein is Protein ctg-1.